The following is a 156-amino-acid chain: Myosin regulatory light chain, striated adductor muscle (156 aa).

Ala1 carries the blocked amino end (Ala) modification. EF-hand domains follow at residues 15–50 (KQIQEMKEAFSMLDVDRDGFVNKDDLKAISEQLGRT) and 84–119 (DSEETIRNAFAMFDELETKKLNIEYIKDLLENMGDN). Ca(2+)-binding residues include Asp28, Asp30, Asp32, and Asp39.

Its function is as follows. In molluscan muscle, calcium regulation is associated with myosin rather than with actin. Muscle myosin contains two types of light chains: the catalytic light chain, essential for ATPase activity, and the regulatory light chain, a calcium-binding protein responsible for Ca(2+) dependent binding and Ca(2+) dependent Mg-ATPase activity. The polypeptide is Myosin regulatory light chain, striated adductor muscle (Chlamys nipponensis akazara (Akazara scallop)).